Here is a 457-residue protein sequence, read N- to C-terminus: Argininosuccinate lyase (457 aa).

It belongs to the lyase 1 family. Argininosuccinate lyase subfamily.

It localises to the cytoplasm. The catalysed reaction is 2-(N(omega)-L-arginino)succinate = fumarate + L-arginine. The protein operates within amino-acid biosynthesis; L-arginine biosynthesis; L-arginine from L-ornithine and carbamoyl phosphate: step 3/3. The chain is Argininosuccinate lyase from Escherichia coli O1:K1 / APEC.